The primary structure comprises 298 residues: Homoserine kinase (298 aa).

An ATP-binding site is contributed by 92–102 (PLARGLGSSAT).

This sequence belongs to the GHMP kinase family. Homoserine kinase subfamily.

Its subcellular location is the cytoplasm. It catalyses the reaction L-homoserine + ATP = O-phospho-L-homoserine + ADP + H(+). The protein operates within amino-acid biosynthesis; L-threonine biosynthesis; L-threonine from L-aspartate: step 4/5. Its function is as follows. Catalyzes the ATP-dependent phosphorylation of L-homoserine to L-homoserine phosphate. The protein is Homoserine kinase (thrB) of Nostoc sp. (strain PCC 7120 / SAG 25.82 / UTEX 2576).